The primary structure comprises 912 residues: Ubiquitin carboxyl-terminal hydrolase 3 (912 aa).

Over residues 1-11 the composition is skewed to basic and acidic residues; it reads MNMQDANKEES. Disordered stretches follow at residues 1 to 30, 68 to 176, 241 to 384, and 396 to 417; these read MNMQ…TNMQ, IYHQ…SYSS, NSSV…TTAG, and GKSS…YVPP. 3 stretches are compositionally biased toward low complexity: residues 82–95, 102–140, and 159–176; these read NNIN…NNNI, SNGI…SNNH, and TNSS…SYSS. Positions 249-259 are enriched in basic residues; the sequence is AHHHTKSHSIP. Residues 260–310 are compositionally biased toward basic and acidic residues; it reads KHNEEVKTETHGEEEDAHDKKPHASKDAHELKKKTEVKKEDAKQDRNEKVI. Positions 335–355 are enriched in low complexity; that stretch reads SKTSSPSPSPPAAKSWSAIAS. Composition is skewed to polar residues over residues 361-384 and 396-406; these read RQAS…TTAG and GKSSSPLLSKQ. The USP domain maps to 460–911; it reads RGIINRANIC…TAYILMYQKR (452 aa). Catalysis depends on C469, which acts as the Nucleophile. H861 (proton acceptor) is an active-site residue.

It belongs to the peptidase C19 family. As to quaternary structure, heterotetramer with BRE5; contains two molecules of BRE5 and two molecules of UBP3. Forms a complex composed of CDC48, DOA1, deubiquitinase UBP3 and probably BRE5. Within the complex interacts directly with DOA1 and CDC48 in a BRE5-independent manner.

The enzyme catalyses Thiol-dependent hydrolysis of ester, thioester, amide, peptide and isopeptide bonds formed by the C-terminal Gly of ubiquitin (a 76-residue protein attached to proteins as an intracellular targeting signal).. Has an ATP-independent isopeptidase activity, cleaving at the C-terminus of the ubiquitin moiety in natural or engineered linear fusion proteins, irrespective of their size or the presence of an N-terminal extension to ubiquitin. Plays a role in regulation of silencing by interacting with SIR4. Also, in conjunction with BRE5, cleaves ubiquitin, leading to the subsequent mono-ubiquitination of SEC23. Required for ribophagy, a process which relocalizes ribosomal particles into the vacuole for degradation in response to starvation. The polypeptide is Ubiquitin carboxyl-terminal hydrolase 3 (UBP3) (Saccharomyces cerevisiae (strain ATCC 204508 / S288c) (Baker's yeast)).